We begin with the raw amino-acid sequence, 461 residues long: L-serine dehydratase (461 aa).

The protein belongs to the iron-sulfur dependent L-serine dehydratase family. The cofactor is [4Fe-4S] cluster.

It carries out the reaction L-serine = pyruvate + NH4(+). The protein operates within carbohydrate biosynthesis; gluconeogenesis. The protein is L-serine dehydratase (sdaA) of Mycobacterium bovis (strain ATCC BAA-935 / AF2122/97).